The sequence spans 297 residues: Lymphocyte antigen 6 complex locus protein G6f (297 aa).

A signal peptide spans 1 to 16; it reads MAVLFLLLFLCGTPQA. The region spanning 17-122 is the Ig-like V-type domain; that stretch reads ADNMQAIYVA…HNYQNWRVYD (106 aa). At 17–235 the chain is on the extracellular side; the sequence is ADNMQAIYVA…APSTGWDMPW (219 aa). A disulfide bridge connects residues Cys-35 and Cys-106. N-linked (GlcNAc...) asparagine glycosylation occurs at Asn-88. A helical membrane pass occupies residues 236-256; the sequence is ILMLLLTMGQGVVILALSIVL. The Cytoplasmic portion of the chain corresponds to 257–297; sequence WRQRVRGAPGRDASIPQFKPEIQVYENIHLARLGPPAHKPR. Phosphotyrosine is present on Tyr-281.

In terms of assembly, homodimer; disulfide-linked. Interacts with GRB2 and GRB7 in a phosphorylation-dependent manner. N-glycosylated.

It is found in the cell membrane. In terms of biological role, may play a role in the downstream signal transduction pathways involving GRB2 and GRB7. The sequence is that of Lymphocyte antigen 6 complex locus protein G6f (LY6G6F) from Homo sapiens (Human).